A 339-amino-acid chain; its full sequence is ADP-L-glycero-D-manno-heptose-6-epimerase (339 aa).

NADP(+) is bound by residues 11–12, 32–33, lysine 39, lysine 54, 75–79, and asparagine 92; these read FI, DD, and EGACS. Tyrosine 139 acts as the Proton acceptor in catalysis. Lysine 143 contacts NADP(+). Substrate is bound at residue asparagine 170. Residues valine 171 and lysine 179 each coordinate NADP(+). Catalysis depends on lysine 179, which acts as the Proton acceptor. Residues arginine 181, histidine 188, 202–205, arginine 215, and tyrosine 294 each bind substrate; that span reads FGEY.

The protein belongs to the NAD(P)-dependent epimerase/dehydratase family. HldD subfamily. As to quaternary structure, homopentamer. NADP(+) serves as cofactor.

It carries out the reaction ADP-D-glycero-beta-D-manno-heptose = ADP-L-glycero-beta-D-manno-heptose. It functions in the pathway nucleotide-sugar biosynthesis; ADP-L-glycero-beta-D-manno-heptose biosynthesis; ADP-L-glycero-beta-D-manno-heptose from D-glycero-beta-D-manno-heptose 7-phosphate: step 4/4. Its function is as follows. Catalyzes the interconversion between ADP-D-glycero-beta-D-manno-heptose and ADP-L-glycero-beta-D-manno-heptose via an epimerization at carbon 6 of the heptose. In Polynucleobacter necessarius subsp. necessarius (strain STIR1), this protein is ADP-L-glycero-D-manno-heptose-6-epimerase.